Consider the following 288-residue polypeptide: ATP synthase gamma chain (288 aa).

It belongs to the ATPase gamma chain family. In terms of assembly, F-type ATPases have 2 components, CF(1) - the catalytic core - and CF(0) - the membrane proton channel. CF(1) has five subunits: alpha(3), beta(3), gamma(1), delta(1), epsilon(1). CF(0) has three main subunits: a, b and c.

The protein localises to the cell inner membrane. In terms of biological role, produces ATP from ADP in the presence of a proton gradient across the membrane. The gamma chain is believed to be important in regulating ATPase activity and the flow of protons through the CF(0) complex. This chain is ATP synthase gamma chain, found in Laribacter hongkongensis (strain HLHK9).